The following is a 427-amino-acid chain: GTPase Obg (427 aa).

The region spanning 1-158 is the Obg domain; it reads MFVDQVKIYV…RDVTLELKVL (158 aa). The OBG-type G domain maps to 159-329; that stretch reads ADVGLVGFPS…LLFEVANLLE (171 aa). Residues 165-172, 190-194, 212-215, 282-285, and 310-312 contribute to the GTP site; these read GFPSVGKS, FTTIV, DLPG, NKMD, and SAV. Mg(2+) is bound by residues Ser172 and Thr192. The OCT domain maps to 349–427; the sequence is YKFESESNFE…ILEYQFEFID (79 aa).

This sequence belongs to the TRAFAC class OBG-HflX-like GTPase superfamily. OBG GTPase family. Monomer. Requires Mg(2+) as cofactor.

The protein resides in the cytoplasm. Functionally, an essential GTPase which binds GTP, GDP and possibly (p)ppGpp with moderate affinity, with high nucleotide exchange rates and a fairly low GTP hydrolysis rate. Plays a role in control of the cell cycle, stress response, ribosome biogenesis and in those bacteria that undergo differentiation, in morphogenesis control. The protein is GTPase Obg of Bacillus mycoides (strain KBAB4) (Bacillus weihenstephanensis).